The sequence spans 489 residues: uncharacterized protein (489 aa).

13 helical membrane passes run 1-21 (MNAA…LGIR), 40-60 (FGTV…FTFL), 74-94 (FYII…LPAV), 117-137 (PLLG…YLVL), 158-178 (AAIW…GIHG), 188-208 (IMIL…YYGG), 234-254 (AWFS…PHTF), 271-291 (IIMP…FAAI), 318-338 (FVGI…SMIL), 362-382 (VSAL…YFTF), 388-408 (IVTL…ALLF), 422-442 (FAGI…ETTI), and 456-476 (LNVG…VSLM).

It belongs to the sodium:solute symporter (SSF) (TC 2.A.21) family.

Its subcellular location is the cell membrane. This is an uncharacterized protein from Bacillus subtilis (strain 168).